The chain runs to 162 residues: Dihydrofolate reductase (162 aa).

Positions 3 to 161 constitute a DHFR domain; sequence KITIIAACAE…VAYTFVHYLG (159 aa). Position 7 to 9 (7 to 9) interacts with substrate; sequence IAA. NADP(+)-binding positions include 8 to 9 and 16 to 21; these read AA and IGAGNA. Position 29 (Asp29) interacts with substrate. Position 45-48 (45-48) interacts with NADP(+); it reads GRKT. Arg60 serves as a coordination point for substrate. NADP(+)-binding positions include 65 to 68 and 98 to 103; these read ISRQ and MGGAQI. Thr117 is a substrate binding site.

The protein belongs to the dihydrofolate reductase family.

The enzyme catalyses (6S)-5,6,7,8-tetrahydrofolate + NADP(+) = 7,8-dihydrofolate + NADPH + H(+). The protein operates within cofactor biosynthesis; tetrahydrofolate biosynthesis; 5,6,7,8-tetrahydrofolate from 7,8-dihydrofolate: step 1/1. Functionally, key enzyme in folate metabolism. Catalyzes an essential reaction for de novo glycine and purine synthesis, and for DNA precursor synthesis. The protein is Dihydrofolate reductase (folA) of Neisseria gonorrhoeae.